Here is a 485-residue protein sequence, read N- to C-terminus: MAEAAAPGTTVTTSGAGAAAAEAAETAEAVSPTPIPTVTAPSPRAGGGVGGSDGSDGSGGRGDSGAYDGSGACGGSDACDGSGDSSGDSWTKQVTCRYFKYGICKEGDNCRYSHDLSDRLCGVVCKYFQRGCCVYGDRCRCEHSKPLKQEEATATELTTKSSLAASSSLSSIVGPLVEMNTNEAESRNSNFATVVAGSEDWANAIEFVPGQPYCGRTVPSCTEAPLQGSVTKEESEEEQTAVETKKQLCPYAAVGQCRYGENCVYLHGDLCDMCGLQVLHPMDAAQRSQHIQACIEAHEKDMEFSFAVQRSKDKVCGICMEVVYEKANPNEHRFGILSNCNHTFCLKCIRKWRSAKEFESRIVKSCPQCRITSNFVIPSEYWVEEKEEKQKLIQKYKEAMSNKACKYFDEGRGSCPFGENCFYKHMYPDGRREEPQRQQVGTSSRNPGQQRNHFWEFFEEGANSNPFDDEEEAVTFELGEMLLML.

Positions 1 to 32 are enriched in low complexity; sequence MAEAAAPGTTVTTSGAGAAAAEAAETAEAVSP. Residues 1-63 are disordered; the sequence is MAEAAAPGTT…GSDGSGGRGD (63 aa). Over residues 45–63 the composition is skewed to gly residues; sequence AGGGVGGSDGSDGSGGRGD. C3H1-type zinc fingers lie at residues 90 to 117, 124 to 146, and 243 to 270; these read WTKQVTCRYFKYGICKEGDNCRYSHDLS, VCKYFQRGCCVYGDRCRCEHSKP, and ETKKQLCPYAAVGQCRYGENCVYLHGDL. Positions 271–298 are makorin-type Cys-His; the sequence is CDMCGLQVLHPMDAAQRSQHIQACIEAH. The segment at 316–370 adopts an RING-type zinc-finger fold; sequence CGICMEVVYEKANPNEHRFGILSNCNHTFCLKCIRKWRSAKEFESRIVKSCPQCR. The C3H1-type 4 zinc-finger motif lies at 399–428; sequence AMSNKACKYFDEGRGSCPFGENCFYKHMYP.

The enzyme catalyses S-ubiquitinyl-[E2 ubiquitin-conjugating enzyme]-L-cysteine + [acceptor protein]-L-lysine = [E2 ubiquitin-conjugating enzyme]-L-cysteine + N(6)-ubiquitinyl-[acceptor protein]-L-lysine.. Its pathway is protein modification; protein ubiquitination. May act as a E3 ubiquitin ligase catalyzing the covalent attachment of ubiquitin moieties onto substrate proteins. This is Putative E3 ubiquitin-protein ligase makorin-4 (MKRN4P) from Homo sapiens (Human).